The primary structure comprises 264 residues: Complement C1q tumor necrosis factor-related protein 6 (264 aa).

The first 24 residues, 1-24 (MRVIMGIASLGFLWAVFLLPLVFG), serve as a signal peptide directing secretion. An N-linked (GlcNAc...) asparagine glycan is attached at Asn-77. The disordered stretch occupies residues 81-125 (LKGDKGDRGPTGTPGKPGKNGTRGDRGSQGVKGDKGQAGSPGSSC). Positions 83 to 124 (GDKGDRGPTGTPGKPGKNGTRGDRGSQGVKGDKGQAGSPGSS) constitute a Collagen-like domain. The span at 90 to 100 (PTGTPGKPGKN) shows a compositional bias: low complexity. The 140-residue stretch at 125 to 264 (CQTHYSAFSV…SGHLIKAEDN (140 aa)) folds into the C1q domain.

The protein localises to the secreted. The chain is Complement C1q tumor necrosis factor-related protein 6 (C1qtnf6) from Mus musculus (Mouse).